We begin with the raw amino-acid sequence, 846 residues long: Arsenate respiratory reductase molybdopterin-containing subunit ArrA (846 aa).

A signal peptide (tat-type signal) is located at residues 1–29 (MRIKRREFLKASAAVGAVAVASPTLNAFA). The 4Fe-4S Mo/W bis-MGD-type domain occupies 43 to 99 (GKWIPSTCQGCTTWCPVEFLFRMAVRSKYAATQLSKANNGYCCVRGHLMLQQLYDPD). [4Fe-4S] cluster contacts are provided by Cys-50, Cys-53, Cys-57, and Cys-85. Arg-155 provides a ligand contact to arsenite. Tyr-156 is a binding site for arsenate. His-179 contributes to the arsenite binding site. Ser-180 lines the arsenate pocket. Cys-183 is a Mo-bis(molybdopterin guanine dinucleotide) binding site. An arsenate-binding site is contributed by Lys-188. Tyr-200 serves as a coordination point for arsenite.

Belongs to the prokaryotic molybdopterin-containing oxidoreductase family. Heterodimer composed of one large subunit (ArrA) and one small subunit (ArrB). [4Fe-4S] cluster serves as cofactor. It depends on Mo-bis(molybdopterin guanine dinucleotide) as a cofactor. In terms of processing, predicted to be exported by the Tat system. The position of the signal peptide cleavage has been experimentally proven.

It is found in the periplasm. It catalyses the reaction arsenite + A + H2O = arsenate + AH2 + H(+). Its function is as follows. Component of the arsenate respiratory reductase (Arr) complex, which catalyzes the reduction of arsenate (As(V)) to arsenite (As(III)). Can use acetate as the electron donor. ArrA is the arsenate-binding subunit. This chain is Arsenate respiratory reductase molybdopterin-containing subunit ArrA, found in Chrysiogenes arsenatis.